We begin with the raw amino-acid sequence, 191 residues long: Adenine phosphoribosyltransferase (191 aa).

This sequence belongs to the purine/pyrimidine phosphoribosyltransferase family. Homodimer.

Its subcellular location is the cytoplasm. The catalysed reaction is AMP + diphosphate = 5-phospho-alpha-D-ribose 1-diphosphate + adenine. Its pathway is purine metabolism; AMP biosynthesis via salvage pathway; AMP from adenine: step 1/1. In terms of biological role, catalyzes a salvage reaction resulting in the formation of AMP, that is energically less costly than de novo synthesis. The polypeptide is Adenine phosphoribosyltransferase (Nocardia farcinica (strain IFM 10152)).